Consider the following 80-residue polypeptide: Putative membrane protein insertion efficiency factor (80 aa).

Positions 61–80 are disordered; sequence KTGKDPVPDHFSLKRNQEGE. Over residues 62–80 the composition is skewed to basic and acidic residues; that stretch reads TGKDPVPDHFSLKRNQEGE.

Belongs to the UPF0161 family.

It is found in the cell membrane. Functionally, could be involved in insertion of integral membrane proteins into the membrane. This is Putative membrane protein insertion efficiency factor from Streptococcus pneumoniae serotype 19F (strain G54).